Here is a 342-residue protein sequence, read N- to C-terminus: Flagellar P-ring protein (342 aa).

An N-terminal signal peptide occupies residues 1 to 19 (MKRVFLWLIFVLAFHKLLA).

Belongs to the FlgI family. As to quaternary structure, the basal body constitutes a major portion of the flagellar organelle and consists of four rings (L,P,S, and M) mounted on a central rod.

The protein localises to the periplasm. It localises to the bacterial flagellum basal body. Functionally, assembles around the rod to form the L-ring and probably protects the motor/basal body from shearing forces during rotation. The chain is Flagellar P-ring protein from Helicobacter pylori (strain G27).